The sequence spans 351 residues: MGRVGVVSWGAYIPKYRIRTEEVARIWGDDPLRIVDLYLVDEKSVEGIDEDAVTIAVEAARRALRRATLDPRRIGAVYVGTESKPYAVKPISSILIDALGLSNNVFAVDMEFACKAGSEGLMAAVGLVESGKVEYGMTVGADTSQGEPGEHLEYSASSGGVALVVGREGVAAELEAAYAYASDTPDFWRREGSPYPMHGEGFTGEPAYFRHVINAARGLMAAYGYKPSDFAYAVFHQPNGRFPVRAASTLNIPMEKVKPGIVVTHIGNTYNASALMGFAKVLDQAKPGDKILVVTFGSGAGSNAYVFSATDLIKERQNAAVPTVEAMLRDKIYVDYAQYLKMRKMIKLFEY.

Asp-30 is a (3S)-3-hydroxy-3-methylglutaryl-CoA binding site. Catalysis depends on Glu-82, which acts as the Proton donor/acceptor. Residues Cys-114, Ser-155, Thr-203, and His-236 each contribute to the (3S)-3-hydroxy-3-methylglutaryl-CoA site. The active-site Acyl-thioester intermediate is the Cys-114. His-236 acts as the Proton donor/acceptor in catalysis. Residue Arg-241 participates in CoA binding. 3 residues coordinate (3S)-3-hydroxy-3-methylglutaryl-CoA: Arg-245, Asn-268, and Ser-298.

This sequence belongs to the thiolase-like superfamily. Archaeal HMG-CoA synthase family. As to quaternary structure, interacts with acetoacetyl-CoA thiolase that catalyzes the precedent step in the pathway and with a DUF35 protein. The acetoacetyl-CoA thiolase/HMG-CoA synthase complex channels the intermediate via a fused CoA-binding site, which allows for efficient coupling of the endergonic thiolase reaction with the exergonic HMGCS reaction.

It carries out the reaction acetoacetyl-CoA + acetyl-CoA + H2O = (3S)-3-hydroxy-3-methylglutaryl-CoA + CoA + H(+). It participates in metabolic intermediate biosynthesis; (R)-mevalonate biosynthesis; (R)-mevalonate from acetyl-CoA: step 2/3. Catalyzes the condensation of acetyl-CoA with acetoacetyl-CoA to form 3-hydroxy-3-methylglutaryl-CoA (HMG-CoA). Functions in the mevalonate (MVA) pathway leading to isopentenyl diphosphate (IPP), a key precursor for the biosynthesis of isoprenoid compounds that are building blocks of archaeal membrane lipids. This is Hydroxymethylglutaryl-CoA synthase from Pyrobaculum neutrophilum (strain DSM 2338 / JCM 9278 / NBRC 100436 / V24Sta) (Thermoproteus neutrophilus).